We begin with the raw amino-acid sequence, 149 residues long: Large ribosomal subunit protein bL9 (149 aa).

This sequence belongs to the bacterial ribosomal protein bL9 family.

Its function is as follows. Binds to the 23S rRNA. The polypeptide is Large ribosomal subunit protein bL9 (Geobacillus thermodenitrificans (strain NG80-2)).